A 381-amino-acid chain; its full sequence is Diguanylate cyclase DosC (381 aa).

A heme-binding site is contributed by His-98. The 57-residue stretch at 325-381 (TPLSVLIIDVDKFKEINDTWGHNTGDEILRKVSFLSQKRLVKSKILGAGSSRKLAVS) folds into the GGDEF domain. Asp-333 lines the Mg(2+) pocket. The substrate site is built by Asn-341 and Asp-350.

It depends on heme as a cofactor. Mg(2+) serves as cofactor.

It carries out the reaction 2 GTP = 3',3'-c-di-GMP + 2 diphosphate. It participates in purine metabolism; 3',5'-cyclic di-GMP biosynthesis. Globin-coupled heme-based oxygen sensor protein displaying diguanylate cyclase (DGC) activity in response to oxygen availability. Thus, catalyzes the synthesis of cyclic diguanylate (c-di-GMP) via the condensation of 2 GTP molecules. Cyclic-di-GMP is a second messenger which controls cell surface-associated traits in bacteria. The sequence is that of Diguanylate cyclase DosC (dosC) from Shigella flexneri serotype 5b (strain 8401).